The sequence spans 102 residues: Small ribosomal subunit protein uS10 (102 aa).

Belongs to the universal ribosomal protein uS10 family. Part of the 30S ribosomal subunit.

Functionally, involved in the binding of tRNA to the ribosomes. This is Small ribosomal subunit protein uS10 from Carboxydothermus hydrogenoformans (strain ATCC BAA-161 / DSM 6008 / Z-2901).